A 614-amino-acid polypeptide reads, in one-letter code: DNA mismatch repair protein MutL (614 aa).

The protein belongs to the DNA mismatch repair MutL/HexB family.

This protein is involved in the repair of mismatches in DNA. It is required for dam-dependent methyl-directed DNA mismatch repair. May act as a 'molecular matchmaker', a protein that promotes the formation of a stable complex between two or more DNA-binding proteins in an ATP-dependent manner without itself being part of a final effector complex. The polypeptide is DNA mismatch repair protein MutL (Thermoanaerobacter sp. (strain X514)).